Consider the following 517-residue polypeptide: Acetylcholine receptor subunit delta (517 aa).

Residues Met-1–Gly-21 form the signal peptide. The Extracellular segment spans residues Leu-22–Lys-245. Asn-97 and Asn-164 each carry an N-linked (GlcNAc...) asparagine glycan. Cys-151 and Cys-165 are oxidised to a cystine. The next 3 helical transmembrane spans lie at Pro-246–Leu-270, Thr-278–Leu-299, and Phe-312–Ile-333. Topologically, residues His-334–Arg-471 are cytoplasmic. Tyr-390 carries the phosphotyrosine; by Tyr-kinases modification. Residues Leu-472–Leu-490 form a helical membrane-spanning segment.

The protein belongs to the ligand-gated ion channel (TC 1.A.9) family. Acetylcholine receptor (TC 1.A.9.1) subfamily. Delta/CHRND sub-subfamily. Pentamer of two alpha chains, and one each of the beta, delta, and gamma (in immature muscle) or epsilon (in mature muscle) chains. The muscle heteropentamer composed of alpha-1, beta-1, delta, epsilon subunits interacts with the alpha-conotoxin ImII.

It is found in the postsynaptic cell membrane. The protein resides in the cell membrane. It catalyses the reaction K(+)(in) = K(+)(out). The enzyme catalyses Na(+)(in) = Na(+)(out). Its function is as follows. After binding acetylcholine, the AChR responds by an extensive change in conformation that affects all subunits and leads to opening of an ion-conducting channel across the plasma membrane. The sequence is that of Acetylcholine receptor subunit delta from Homo sapiens (Human).